The sequence spans 137 residues: MAVKIRLKRLGKIRAPYYRIVVADSRTKRDGRVIEEIGKYHPTEEPSFIEVQSERAQYWLSVGAQPTEQVEALLKLTGDWGRFKGDKDAVSTVRVREAKPAYVADEKKKPVLKPKTEKAAPAPEAAAPEAESTEEQA.

The span at 104–118 shows a compositional bias: basic and acidic residues; the sequence is ADEKKKPVLKPKTEK. The disordered stretch occupies residues 104-137; that stretch reads ADEKKKPVLKPKTEKAAPAPEAAAPEAESTEEQA. A compositionally biased stretch (low complexity) spans 119–130; sequence AAPAPEAAAPEA.

Belongs to the bacterial ribosomal protein bS16 family.

This is Small ribosomal subunit protein bS16 from Clavibacter michiganensis subsp. michiganensis (strain NCPPB 382).